The chain runs to 586 residues: RNA-directed RNA polymerase subunit beta (586 aa).

The region spanning 259–391 (VRAYSGSCSN…TNEKKTFFDG (133 aa)) is the RdRp catalytic domain. Residues D274, D359, and D360 each contribute to the Mg(2+) site.

In terms of assembly, homodimer; the replicase complex can dimerize. Part of the viral RNA-dependent RNA polymerase complex, the other subunits are the host ribosomal protein S1, EF-Tu and EF-Ts. S1 is needed for the initiation of genomic RNA (+)-strand replication. Mg(2+) serves as cofactor.

The enzyme catalyses RNA(n) + a ribonucleoside 5'-triphosphate = RNA(n+1) + diphosphate. This is the catalytic subunit of the viral RNA-dependent RNA polymerase complex. This complex is involved in viral RNA replication that produces (+)-stranded genomes via a complementary, (-)-stranded intermediate. Binds RNA cooperatively with the host ribosomal protein S1. This Escherichia coli protein is RNA-directed RNA polymerase subunit beta.